The primary structure comprises 140 residues: uncharacterized protein (140 aa).

The next 2 helical transmembrane spans lie at 26–43 (YLDLLLVLSIIDVLTGVI) and 64–86 (LLNFFAVILANVIDTVLNLNGVL).

This sequence belongs to the bacteriophage holin family. Cp-1 holin subfamily.

Its subcellular location is the cell membrane. This is an uncharacterized protein from Bacillus subtilis (strain 168).